Reading from the N-terminus, the 568-residue chain is Light-independent protochlorophyllide reductase subunit B (568 aa).

D36 lines the [4Fe-4S] cluster pocket. The active-site Proton donor is D293. Position 437-438 (437-438 (GM)) interacts with substrate. Residues 476–517 (ANGHPEAGVSVGAAEPSAAPSRSVVTEESNRATTPSSSTVHP) form a disordered region. Over residues 498–515 (SVVTEESNRATTPSSSTV) the composition is skewed to polar residues.

This sequence belongs to the ChlB/BchB/BchZ family. In terms of assembly, protochlorophyllide reductase is composed of three subunits; BchL, BchN and BchB. Forms a heterotetramer of two BchB and two BchN subunits. [4Fe-4S] cluster serves as cofactor.

It catalyses the reaction chlorophyllide a + oxidized 2[4Fe-4S]-[ferredoxin] + 2 ADP + 2 phosphate = protochlorophyllide a + reduced 2[4Fe-4S]-[ferredoxin] + 2 ATP + 2 H2O. It participates in porphyrin-containing compound metabolism; bacteriochlorophyll biosynthesis (light-independent). Its function is as follows. Component of the dark-operative protochlorophyllide reductase (DPOR) that uses Mg-ATP and reduced ferredoxin to reduce ring D of protochlorophyllide (Pchlide) to form chlorophyllide a (Chlide). This reaction is light-independent. The NB-protein (BchN-BchB) is the catalytic component of the complex. This Roseiflexus sp. (strain RS-1) protein is Light-independent protochlorophyllide reductase subunit B.